Reading from the N-terminus, the 197-residue chain is Imidazoleglycerol-phosphate dehydratase (197 aa).

This sequence belongs to the imidazoleglycerol-phosphate dehydratase family.

The protein resides in the cytoplasm. The enzyme catalyses D-erythro-1-(imidazol-4-yl)glycerol 3-phosphate = 3-(imidazol-4-yl)-2-oxopropyl phosphate + H2O. Its pathway is amino-acid biosynthesis; L-histidine biosynthesis; L-histidine from 5-phospho-alpha-D-ribose 1-diphosphate: step 6/9. The chain is Imidazoleglycerol-phosphate dehydratase from Methylocella silvestris (strain DSM 15510 / CIP 108128 / LMG 27833 / NCIMB 13906 / BL2).